A 484-amino-acid polypeptide reads, in one-letter code: Glutamate--tRNA ligase (484 aa).

Residues 11 to 21 carry the 'HIGH' region motif; that stretch reads PSPTGYLHIGN. The short motif at 252-256 is the 'KMSKS' region element; the sequence is KLSKR. Lys-255 is an ATP binding site.

Belongs to the class-I aminoacyl-tRNA synthetase family. Glutamate--tRNA ligase type 1 subfamily. In terms of assembly, monomer.

Its subcellular location is the cytoplasm. It catalyses the reaction tRNA(Glu) + L-glutamate + ATP = L-glutamyl-tRNA(Glu) + AMP + diphosphate. Catalyzes the attachment of glutamate to tRNA(Glu) in a two-step reaction: glutamate is first activated by ATP to form Glu-AMP and then transferred to the acceptor end of tRNA(Glu). The chain is Glutamate--tRNA ligase from Staphylococcus aureus (strain COL).